Consider the following 131-residue polypeptide: Small ribosomal subunit protein bS6 (131 aa).

The tract at residues 97–131 (TEASPMVKAKDERRRDVAEDLDEEEVDDVAEDSEE) is disordered. Residues 104–114 (KAKDERRRDVA) show a composition bias toward basic and acidic residues. Acidic residues predominate over residues 115–131 (EDLDEEEVDDVAEDSEE).

The protein belongs to the bacterial ribosomal protein bS6 family.

Binds together with bS18 to 16S ribosomal RNA. The protein is Small ribosomal subunit protein bS6 of Proteus mirabilis (strain HI4320).